A 138-amino-acid polypeptide reads, in one-letter code: Basic phospholipase A2 DsM-b1/DsM-b1' (138 aa).

The N-terminal stretch at 1 to 16 (MRTLWIVAMCLIGVEG) is a signal peptide. 7 disulfides stabilise this stretch: Cys42–Cys131, Cys44–Cys60, Cys59–Cys111, Cys65–Cys138, Cys66–Cys104, Cys73–Cys97, and Cys91–Cys102. 3 residues coordinate Ca(2+): Tyr43, Gly45, and Gly47. His63 is a catalytic residue. Asp64 is a Ca(2+) binding site. Asp105 is an active-site residue.

Ca(2+) serves as cofactor. In terms of tissue distribution, expressed by the venom gland.

It is found in the secreted. The catalysed reaction is a 1,2-diacyl-sn-glycero-3-phosphocholine + H2O = a 1-acyl-sn-glycero-3-phosphocholine + a fatty acid + H(+). Its function is as follows. Exhibits high hydrolytic activities and shows strong preference for the anionic micelles (dPPC with deoxycholate) to the zwitterionic micelles (dPPC with Triton X-100). PLA2 catalyzes the calcium-dependent hydrolysis of the 2-acyl groups in 3-sn-phosphoglycerides. The sequence is that of Basic phospholipase A2 DsM-b1/DsM-b1' from Daboia siamensis (Eastern Russel's viper).